A 74-amino-acid polypeptide reads, in one-letter code: Antimicrobial peptide 1 (74 aa).

Positions 1-22 (MEIKYLLTVFLVLLIGSDYCQA) are cleaved as a signal peptide. Lysine 40 is subject to Lysine amide. A propeptide spanning residues 46 to 74 (DLDGQIDRSRNFRKRDAELEELLSKLPIY) is cleaved from the precursor.

Expressed by the venom gland.

It is found in the secreted. The protein resides in the target cell membrane. Functionally, has antibacterial activity against the Gram-positive bacteria S.aureus (MIC=20 uM), the Gram-negative bacteria E.coli (MIC=150 uM), and the yeast C.albicans (MIC=64 uM). Causes hemolysis on horse erythrocytes. This is Antimicrobial peptide 1 from Androctonus amoreuxi (African fattail scorpion).